A 643-amino-acid polypeptide reads, in one-letter code: Cell pattern formation-associated protein asm-1 (643 aa).

Residues 1–37 are disordered; sequence MNPNTPADVYYGQMSQGSSMPVTTVPSHSHYASQQPP. A compositionally biased stretch (polar residues) spans 13-33; sequence QMSQGSSMPVTTVPSHSHYAS. An HTH APSES-type domain is found at 116–222; it reads RVTATLWEDE…HNIGALLYHP (107 aa). The H-T-H motif DNA-binding region spans 150–171; that stretch reads GTKLLNVAGMTRGRRDGILKSE. Positions 229-627 are disordered; it reads SQVMAAAEQR…GSLPSPTYTA (399 aa). A compositionally biased stretch (polar residues) spans 306-335; that stretch reads DGYQWSQQSMSGTQGNSSLSLDTSLGSNAR. Positions 336–349 are enriched in low complexity; it reads SMPSTPATTPPGST. Polar residues predominate over residues 350-367; sequence IQSMQNYPPVSQSYESSR. Over residues 368–391 the composition is skewed to low complexity; it reads QMYQGQSAQQAQYQSQQHYSSQPQ. Composition is skewed to polar residues over residues 471–481, 529–551, and 563–577; these read GSYNYNTQAVN, QPSS…TQGN, and SLPN…VMNG. Residues 583-612 are nuclear localization domain; sequence KRGRDDDDDGGRPTTSAPNLGPGMDMKRRK.

The protein belongs to the EFG1/PHD1/stuA family.

The protein localises to the nucleus. Functionally, transcription factor that regulates asexual reproduction. Binds the StuA-response elements (StRE) with the consensus sequence 5'-(A/T)CGCG(T/A)N(A/C)-3' at the promoters of target genes. Required for rapid conidial germination, normal vegetative morphology, and protoperithecium formation. This Neurospora crassa (strain ATCC 24698 / 74-OR23-1A / CBS 708.71 / DSM 1257 / FGSC 987) protein is Cell pattern formation-associated protein asm-1.